The sequence spans 1344 residues: Regulatory-associated protein of TOR 1 (1344 aa).

A compositionally biased stretch (basic and acidic residues) spans 28-44 (CVSSHDDGDSRRKDSEA). Disordered stretches follow at residues 28 to 56 (CVSSHDDGDSRRKDSEAKSSSSYGNGTTE) and 771 to 818 (ASTD…DSVS). A compositionally biased stretch (low complexity) spans 785–816 (SSSPLGSSGLMQGSPLSDDSSLHSDSGMMHDS). WD repeat units lie at residues 1025–1064 (RFETGTKTALLHPFSPIVVAADENERIRVWNYEEATLLNG), 1070–1111 (FPDK…GKQK), 1125–1164 (GARDLNAVVDWQQQSGYLYASGETSTVTLWDLEKEQLVRS), 1168–1208 (ESEC…PLVC), 1214–1255 (QKVE…DTYL), 1259–1298 (AHRGSLTALAVHRHAPIIASGSAKQLIKVFSLQGEQLGII), and 1307–1344 (QKIGSVSCLTFHPYQVLLAAGAADSFVSIYTHDNSQAR).

This sequence belongs to the WD repeat RAPTOR family. In terms of assembly, interacts with TOR, ATPK1 and ML1. Interacts with KIN10. In terms of processing, phosphorylated by KIN10. As to expression, expressed in roots, leaves, flowers and seeds.

It localises to the cytoplasm. Probable component of the plant TOR kinase pathway that recruits substrates for TOR. Modulates plant cell growth and regulates the activity of ATPK1 kinase in response to osmotic stress. This is Regulatory-associated protein of TOR 1 (RAPTOR1) from Arabidopsis thaliana (Mouse-ear cress).